We begin with the raw amino-acid sequence, 124 residues long: Small ribosomal subunit protein uS12 (124 aa).

Aspartate 89 is subject to 3-methylthioaspartic acid.

The protein belongs to the universal ribosomal protein uS12 family. Part of the 30S ribosomal subunit. Contacts proteins S8 and S17. May interact with IF1 in the 30S initiation complex.

In terms of biological role, with S4 and S5 plays an important role in translational accuracy. Functionally, interacts with and stabilizes bases of the 16S rRNA that are involved in tRNA selection in the A site and with the mRNA backbone. Located at the interface of the 30S and 50S subunits, it traverses the body of the 30S subunit contacting proteins on the other side and probably holding the rRNA structure together. The combined cluster of proteins S8, S12 and S17 appears to hold together the shoulder and platform of the 30S subunit. The chain is Small ribosomal subunit protein uS12 from Aliivibrio fischeri (strain ATCC 700601 / ES114) (Vibrio fischeri).